A 303-amino-acid polypeptide reads, in one-letter code: Mycothiol acetyltransferase (303 aa).

2 N-acetyltransferase domains span residues 6 to 134 (TSLA…VEGD) and 154 to 303 (NEAY…QSSS). Glutamate 37 provides a ligand contact to 1D-myo-inositol 2-(L-cysteinylamino)-2-deoxy-alpha-D-glucopyranoside. Residues 75 to 77 (VVV) and 83 to 88 (RQGYGS) contribute to the acetyl-CoA site. 1D-myo-inositol 2-(L-cysteinylamino)-2-deoxy-alpha-D-glucopyranoside-binding residues include glutamate 180, lysine 221, and glutamate 233. Acetyl-CoA is bound by residues 237–239 (VGL) and 244–250 (RRRGLGD). Residue tyrosine 271 participates in 1D-myo-inositol 2-(L-cysteinylamino)-2-deoxy-alpha-D-glucopyranoside binding. 276 to 281 (NESARR) lines the acetyl-CoA pocket.

This sequence belongs to the acetyltransferase family. MshD subfamily. In terms of assembly, monomer.

It catalyses the reaction 1D-myo-inositol 2-(L-cysteinylamino)-2-deoxy-alpha-D-glucopyranoside + acetyl-CoA = mycothiol + CoA + H(+). In terms of biological role, catalyzes the transfer of acetyl from acetyl-CoA to desacetylmycothiol (Cys-GlcN-Ins) to form mycothiol. The protein is Mycothiol acetyltransferase of Corynebacterium diphtheriae (strain ATCC 700971 / NCTC 13129 / Biotype gravis).